A 174-amino-acid chain; its full sequence is Large ribosomal subunit protein uL10 (174 aa).

This sequence belongs to the universal ribosomal protein uL10 family. Part of the ribosomal stalk of the 50S ribosomal subunit. The N-terminus interacts with L11 and the large rRNA to form the base of the stalk. The C-terminus forms an elongated spine to which L12 dimers bind in a sequential fashion forming a multimeric L10(L12)X complex.

In terms of biological role, forms part of the ribosomal stalk, playing a central role in the interaction of the ribosome with GTP-bound translation factors. The chain is Large ribosomal subunit protein uL10 from Rubrobacter xylanophilus (strain DSM 9941 / JCM 11954 / NBRC 16129 / PRD-1).